Here is a 436-residue protein sequence, read N- to C-terminus: Methanethiol oxidase (436 aa).

Residues 1–24 (MKRREFGALAAGALAMGLPFRAFA) form the signal peptide.

This sequence belongs to the selenium-binding protein family.

It localises to the periplasm. The enzyme catalyses methanethiol + O2 + H2O = hydrogen sulfide + formaldehyde + H2O2 + H(+). Its pathway is organosulfur degradation. Its function is as follows. Catalyzes the oxidation of methanethiol. The protein is Methanethiol oxidase of Ruegeria pomeroyi (strain ATCC 700808 / DSM 15171 / DSS-3) (Silicibacter pomeroyi).